A 314-amino-acid polypeptide reads, in one-letter code: Methionyl-tRNA formyltransferase (314 aa).

110 to 113 (SLLP) is a (6S)-5,6,7,8-tetrahydrofolate binding site.

This sequence belongs to the Fmt family.

It catalyses the reaction L-methionyl-tRNA(fMet) + (6R)-10-formyltetrahydrofolate = N-formyl-L-methionyl-tRNA(fMet) + (6S)-5,6,7,8-tetrahydrofolate + H(+). Functionally, attaches a formyl group to the free amino group of methionyl-tRNA(fMet). The formyl group appears to play a dual role in the initiator identity of N-formylmethionyl-tRNA by promoting its recognition by IF2 and preventing the misappropriation of this tRNA by the elongation apparatus. The chain is Methionyl-tRNA formyltransferase from Bacillus cereus (strain ATCC 14579 / DSM 31 / CCUG 7414 / JCM 2152 / NBRC 15305 / NCIMB 9373 / NCTC 2599 / NRRL B-3711).